We begin with the raw amino-acid sequence, 873 residues long: Cyanophycin synthetase (873 aa).

The ATP-grasp domain maps to 224-480 (KTILQDAGIP…VAAPVLDMLF (257 aa)). 495-501 (GTNGKTT) contributes to the ATP binding site.

In the C-terminal section; belongs to the MurCDEF family. Homodimer.

The catalysed reaction is [L-4-(L-arginin-2-N-yl)aspartate](n) + L-aspartate + ATP = [L-4-(L-arginin-2-N-yl)aspartate](n)-L-aspartate + ADP + phosphate + H(+). It carries out the reaction [L-4-(L-arginin-2-N-yl)aspartate](n)-L-aspartate + L-arginine + ATP = [L-4-(L-arginin-2-N-yl)aspartate](n+1) + ADP + phosphate + H(+). Its function is as follows. Catalyzes the ATP-dependent polymerization of arginine and aspartate to multi-L-arginyl-poly-L-aspartic acid (cyanophycin; a water-insoluble reserve polymer). The chain is Cyanophycin synthetase (cphA) from Synechocystis sp. (strain ATCC 27184 / PCC 6803 / Kazusa).